We begin with the raw amino-acid sequence, 201 residues long: Small ribosomal subunit protein uS4 (201 aa).

In terms of domain architecture, S4 RNA-binding spans 91 to 151; it reads SRLDNVVYRA…EKSQKMIWFE (61 aa).

This sequence belongs to the universal ribosomal protein uS4 family. In terms of assembly, part of the 30S ribosomal subunit. Contacts protein S5. The interaction surface between S4 and S5 is involved in control of translational fidelity.

Functionally, one of the primary rRNA binding proteins, it binds directly to 16S rRNA where it nucleates assembly of the body of the 30S subunit. In terms of biological role, with S5 and S12 plays an important role in translational accuracy. The sequence is that of Small ribosomal subunit protein uS4 from Corynebacterium diphtheriae (strain ATCC 700971 / NCTC 13129 / Biotype gravis).